The chain runs to 510 residues: NAD(P)H-quinone oxidoreductase subunit 2 B, chloroplastic (510 aa).

13 helical membrane passes run 24 to 44 (LLLF…GLIL), 57 to 77 (IPWL…ALLF), 99 to 119 (IFQF…VEYI), 124 to 144 (MAIT…MFLC), 149 to 169 (LITI…LSGY), 183 to 203 (YLLM…WLYG), 227 to 247 (PGIS…LSPA), 295 to 315 (WHLL…LIAI), 323 to 343 (MLAY…IVGD), 347 to 367 (GYAS…GTFA), 395 to 415 (ALSL…AGFF), 418 to 438 (LHLF…IGLL), and 482 to 502 (LSMI…NPII).

Belongs to the complex I subunit 2 family. In terms of assembly, NDH is composed of at least 16 different subunits, 5 of which are encoded in the nucleus.

The protein resides in the plastid. The protein localises to the chloroplast thylakoid membrane. The enzyme catalyses a plastoquinone + NADH + (n+1) H(+)(in) = a plastoquinol + NAD(+) + n H(+)(out). It catalyses the reaction a plastoquinone + NADPH + (n+1) H(+)(in) = a plastoquinol + NADP(+) + n H(+)(out). NDH shuttles electrons from NAD(P)H:plastoquinone, via FMN and iron-sulfur (Fe-S) centers, to quinones in the photosynthetic chain and possibly in a chloroplast respiratory chain. The immediate electron acceptor for the enzyme in this species is believed to be plastoquinone. Couples the redox reaction to proton translocation, and thus conserves the redox energy in a proton gradient. This chain is NAD(P)H-quinone oxidoreductase subunit 2 B, chloroplastic, found in Cucumis sativus (Cucumber).